The primary structure comprises 421 residues: MNTLQRRKTHQVRIDHITVGSEAPVVIQSMTNTDTADAKATALQIKELSDAGSEMVRITVNSPEAASKVAEIRRRLDDMGYATPLIGDFHFNGERLLAEFPECGKALSKYRINPGNVGKGVKGDEKFAFMIRTAAENDKAVRIGVNWGSLDQSLAKRMMDANLASSAPKPPEEVTKEALIVSALESAEKAVLLGLPEDKIILSCKVSAVQDLIQVYRELGSRCAYPLHLGLTEAGMGSKGIVASTAALSVLLQEGIGDTIRISLTPEPGSPRTQEVVVGQEILQTMGLRSFTPMVTACPGCGRTTSTVFQELAQDVQNYLRQKMSIWRTLYPGVESLNVAVMGCVVNGPGESKLADIGISLPGTGETPVAPVYVDGERKVTLKGDNIATEFLAIVEEYVKTNYGENGLKRHQGKVIPIHSL.

[4Fe-4S] cluster-binding residues include cysteine 298, cysteine 301, cysteine 344, and glutamate 351.

Belongs to the IspG family. Requires [4Fe-4S] cluster as cofactor.

It carries out the reaction (2E)-4-hydroxy-3-methylbut-2-enyl diphosphate + oxidized [flavodoxin] + H2O + 2 H(+) = 2-C-methyl-D-erythritol 2,4-cyclic diphosphate + reduced [flavodoxin]. It participates in isoprenoid biosynthesis; isopentenyl diphosphate biosynthesis via DXP pathway; isopentenyl diphosphate from 1-deoxy-D-xylulose 5-phosphate: step 5/6. In terms of biological role, converts 2C-methyl-D-erythritol 2,4-cyclodiphosphate (ME-2,4cPP) into 1-hydroxy-2-methyl-2-(E)-butenyl 4-diphosphate. This is 4-hydroxy-3-methylbut-2-en-1-yl diphosphate synthase (flavodoxin) from Neisseria meningitidis serogroup B (strain ATCC BAA-335 / MC58).